The chain runs to 152 residues: MKTPIELKILDSRIGSEFPLPAYATPGSAGMDLRAMLDTNLTIAPGETVLIPTGIAVHVADPSLAAVILPRSGMGHKHGIVLGNLVGLIDSDYQGPLMVSCWNRGNEPYTLQIGDRLAQLVFVPVVQAEFKLVDEFDTSMRGEGGFGHSGTR.

Residues 71–73, asparagine 84, 88–90, and methionine 98 contribute to the substrate site; these read RSG and LID.

It belongs to the dUTPase family. Mg(2+) is required as a cofactor.

It catalyses the reaction dUTP + H2O = dUMP + diphosphate + H(+). It participates in pyrimidine metabolism; dUMP biosynthesis; dUMP from dCTP (dUTP route): step 2/2. Its function is as follows. This enzyme is involved in nucleotide metabolism: it produces dUMP, the immediate precursor of thymidine nucleotides and it decreases the intracellular concentration of dUTP so that uracil cannot be incorporated into DNA. In Shewanella amazonensis (strain ATCC BAA-1098 / SB2B), this protein is Deoxyuridine 5'-triphosphate nucleotidohydrolase.